Reading from the N-terminus, the 488-residue chain is N-succinylglutamate 5-semialdehyde dehydrogenase (488 aa).

221–226 (GSSRTG) contacts NAD(+). Catalysis depends on residues glutamate 244 and cysteine 278.

Belongs to the aldehyde dehydrogenase family. AstD subfamily.

The catalysed reaction is N-succinyl-L-glutamate 5-semialdehyde + NAD(+) + H2O = N-succinyl-L-glutamate + NADH + 2 H(+). The protein operates within amino-acid degradation; L-arginine degradation via AST pathway; L-glutamate and succinate from L-arginine: step 4/5. Functionally, catalyzes the NAD-dependent reduction of succinylglutamate semialdehyde into succinylglutamate. In Pseudomonas fluorescens (strain ATCC BAA-477 / NRRL B-23932 / Pf-5), this protein is N-succinylglutamate 5-semialdehyde dehydrogenase.